A 104-amino-acid chain; its full sequence is Pterin-4-alpha-carbinolamine dehydratase (104 aa).

A2 is subject to N-acetylalanine. Residues 61-63 (DHH) and 78-81 (STHE) each bind substrate.

It belongs to the pterin-4-alpha-carbinolamine dehydratase family. Homotetramer and homodimer. Heterotetramer with HNF1A; formed by a dimer of dimers. Interacts with HNF1B (via HNF-p1 domain); the interaction increases HNF1B transactivation activity.

Its subcellular location is the cytoplasm. It localises to the nucleus. The enzyme catalyses (4aS,6R)-4a-hydroxy-L-erythro-5,6,7,8-tetrahydrobiopterin = (6R)-L-erythro-6,7-dihydrobiopterin + H2O. In terms of biological role, involved in tetrahydrobiopterin biosynthesis. Seems to both prevent the formation of 7-pterins and accelerate the formation of quinonoid-BH2. Coactivator for HNF1A-dependent transcription. Regulates the dimerization of homeodomain protein HNF1A and enhances its transcriptional activity. Also acts as a coactivator for HNF1B-dependent transcription. The polypeptide is Pterin-4-alpha-carbinolamine dehydratase (Pcbd1) (Rattus norvegicus (Rat)).